Consider the following 71-residue polypeptide: NAD(P)H-quinone oxidoreductase subunit O (71 aa).

It belongs to the complex I NdhO subunit family. NDH-1 can be composed of about 15 different subunits; different subcomplexes with different compositions have been identified which probably have different functions.

It is found in the cellular thylakoid membrane. It catalyses the reaction a plastoquinone + NADH + (n+1) H(+)(in) = a plastoquinol + NAD(+) + n H(+)(out). The enzyme catalyses a plastoquinone + NADPH + (n+1) H(+)(in) = a plastoquinol + NADP(+) + n H(+)(out). Functionally, NDH-1 shuttles electrons from an unknown electron donor, via FMN and iron-sulfur (Fe-S) centers, to quinones in the respiratory and/or the photosynthetic chain. The immediate electron acceptor for the enzyme in this species is believed to be plastoquinone. Couples the redox reaction to proton translocation, and thus conserves the redox energy in a proton gradient. Cyanobacterial NDH-1 also plays a role in inorganic carbon-concentration. In Picosynechococcus sp. (strain ATCC 27264 / PCC 7002 / PR-6) (Agmenellum quadruplicatum), this protein is NAD(P)H-quinone oxidoreductase subunit O.